The primary structure comprises 345 residues: MSTLELHGIGKSYNAIRVLEHIDLQVAAGSRTAIVGPSGSGKTTLLRIIAGFEIPDGGQILLQGQAMGNGSGWVPAHLRGIGFVPQDGALFPHFTVAGNIGFGLKGGKREKQRRIEALMEMVALDRRLAALWPHELSGGQQQRVALARALSQQPRLMLLDEPFSALDTGLRAATRKAVAELLTEAKVASILVTHDQSEALSFADQVAVMRSGRLAQVGAPQDLYLRPVDEPTASFLGETLVLTAELAHGWADCALGRIAVDDRQRSGPARIMLRPEQIQIGLSDPAQRGQAVITGIDFAGFVSTLNLQMAATGAQLEIKTVSREGLRPGAQVTLNVMGQAHIFAG.

The ABC transporter domain occupies 4–236; it reads LELHGIGKSY…PVDEPTASFL (233 aa). 36-43 contributes to the ATP binding site; the sequence is GPSGSGKT.

Belongs to the ABC transporter superfamily. Fe(3+) ion importer (TC 3.A.1.10) family. As to quaternary structure, the complex is composed of two ATP-binding proteins (FbpC), two transmembrane proteins (FbpB) and a solute-binding protein (FbpA).

The protein localises to the cell inner membrane. The enzyme catalyses Fe(3+)(out) + ATP + H2O = Fe(3+)(in) + ADP + phosphate + H(+). In terms of biological role, part of the ABC transporter complex FbpABC involved in Fe(3+) ions import. Responsible for energy coupling to the transport system. The chain is Fe(3+) ions import ATP-binding protein FbpC from Serratia marcescens.